Reading from the N-terminus, the 180-residue chain is Pyruvoyl-dependent arginine decarboxylase (180 aa).

Residue S41 is modified to Pyruvic acid (Ser).

Belongs to the PdaD family. It depends on pyruvate as a cofactor.

The catalysed reaction is L-arginine + H(+) = agmatine + CO2. This is Pyruvoyl-dependent arginine decarboxylase from Methanococcoides burtonii (strain DSM 6242 / NBRC 107633 / OCM 468 / ACE-M).